Reading from the N-terminus, the 158-residue chain is Cyclic pyranopterin monophosphate synthase (158 aa).

Substrate is bound by residues 75-77 (LCH) and 113-114 (ME). The active site involves Asp128.

The protein belongs to the MoaC family. As to quaternary structure, homohexamer; trimer of dimers.

The enzyme catalyses (8S)-3',8-cyclo-7,8-dihydroguanosine 5'-triphosphate = cyclic pyranopterin phosphate + diphosphate. It functions in the pathway cofactor biosynthesis; molybdopterin biosynthesis. Functionally, catalyzes the conversion of (8S)-3',8-cyclo-7,8-dihydroguanosine 5'-triphosphate to cyclic pyranopterin monophosphate (cPMP). This Paraburkholderia phytofirmans (strain DSM 17436 / LMG 22146 / PsJN) (Burkholderia phytofirmans) protein is Cyclic pyranopterin monophosphate synthase.